A 956-amino-acid chain; its full sequence is Pollen-specific leucine-rich repeat extensin-like protein 1 (956 aa).

The first 30 residues, 1–30, serve as a signal peptide directing secretion; it reads MTRRTMEKPFGCFLLLFCFTISIFFYSAAA. LRR repeat units lie at residues 39 to 59, 60 to 84, 119 to 143, 144 to 166, 168 to 191, 192 to 215, 217 to 238, 240 to 261, 262 to 285, 287 to 309, and 310 to 332; these read LTRRQLLALSENGDLPDDIEY, EVDLDLKFANNRLKRAYIALQAWKK, VLVVAGIDLNHADIAGYLPPELGLL, TDVALFHVNSNRFCGVIPKSLSK, TLMYEFDVSNNRFVGPFPTVALSW, PSLKFLDIRYNDFEGKLPPEIFDK, LDAIFLNNNRFESTIPETIGKS, ASVVTFAHNKFSGCIPKTIGQM, KNLNEIVFIGNNLSGCLPNEIGSL, NVTVFDASSNGFVGSLPSTLSGL, and ANVEQMDFSYNKFTGFVTDNICK. Asn273 and Asn287 each carry an N-linked (GlcNAc...) asparagine glycan. The N-linked (GlcNAc...) asparagine glycan is linked to Asn338. Residues 355 to 377 show a composition bias toward polar residues; that stretch reads PGSSQEKQFDDTSNCLQNRPNQK. Disordered stretches follow at residues 355–380 and 397–956; these read PGSSQEKQFDDTSNCLQNRPNQKSAK and CAGG…FPGY. Positions 408–417 are enriched in pro residues; that stretch reads SPKPTPTPKA. 2 stretches are compositionally biased toward basic and acidic residues: residues 431-441 and 452-534; these read EPSKPKPEESP and TPSH…EESP. Residues 640 to 830 are compositionally biased toward pro residues; sequence QSPPVHSPPP…KPVTPLPPAT (191 aa). Residues 651 to 956 are contains the Ser-Pro(4) repeats; it reads PPVHSPPPPV…SPPPPMFPGY (306 aa). The span at 837–852 shows a compositional bias: polar residues; that stretch reads PTPSSSESGEISTPVQ. A compositionally biased stretch (pro residues) spans 947–956; sequence SPPPPMFPGY.

In terms of processing, hydroxylated on proline residues in the S-P-P-P-P repeat. Post-translationally, O-glycosylated on hydroxyprolines. Expressed in flowers, stamen, pollen, and pollinated carpels.

The protein localises to the secreted. It localises to the cell wall. Modulates cell morphogenesis by regulating cell wall formation and assembly, and/or growth polarization. This is Pollen-specific leucine-rich repeat extensin-like protein 1 (PEX1) from Arabidopsis thaliana (Mouse-ear cress).